Consider the following 135-residue polypeptide: Beta-galactoside-binding lectin (135 aa).

Residue Ser-2 is modified to N-acetylserine. Cys-3 and Cys-8 are disulfide-bonded. Residues 5–135 (GPVCTNLGLK…DFTLRSVSWE (131 aa)) enclose the Galectin domain. Residues 46 to 50 (HFNPR), His-54, Asn-63, 70 to 73 (WGTE), and 70 to 76 (WGTEQRE) each bind a beta-D-galactoside.

In terms of assembly, homodimer; disulfide-linked. (Microbial infection) Interacts with newcastle disease virus protein HN; this interaction inhibits viral adsorption rather than internalization. In terms of tissue distribution, mainly in the intestine (adult), mainly in the skin (embryo).

Its function is as follows. This protein binds beta-galactoside. May participate in host antiviral defense through specific interaction with glycans on the viral envelope glycoproteins. In Gallus gallus (Chicken), this protein is Beta-galactoside-binding lectin (CG-1B).